We begin with the raw amino-acid sequence, 162 residues long: Cadmium metallothionein (162 aa).

Positions 1–2 are excised as a propeptide; it reads MD.

Functionally, the metallothioneins are involved in the cellular sequestration of toxic metal ions. In Tetrahymena thermophila, this protein is Cadmium metallothionein (MTT1).